Reading from the N-terminus, the 132-residue chain is Global transcriptional regulator Spx 2 (132 aa).

Cys10 and Cys13 are disulfide-bonded.

This sequence belongs to the ArsC family. Spx subfamily. Interacts with the C-terminal domain of the alpha subunit of the RNAP.

The protein localises to the cytoplasm. Its function is as follows. Global transcriptional regulator that plays a key role in stress response and exerts either positive or negative regulation of genes. Acts by interacting with the C-terminal domain of the alpha subunit of the RNA polymerase (RNAP). This interaction can enhance binding of RNAP to the promoter region of target genes and stimulate their transcription, or block interaction of RNAP with activator. The protein is Global transcriptional regulator Spx 2 of Lactococcus lactis subsp. lactis (strain IL1403) (Streptococcus lactis).